The sequence spans 530 residues: Seeligeriolysin (530 aa).

An N-terminal signal peptide occupies residues 1–25 (MKIFGLVIMSLLFVSLPITQQPEAR). Positions 36–55 (TISPAETPESPPATPKTPVE) are disordered. The next 4 membrane-spanning stretches (beta stranded) occupy residues 215 to 228 (ESQL…AFKA), 235 to 244 (VNFEAISDGK), 313 to 322 (SNKVKTAFEA), and 330 to 342 (KGDV…IKNS). Positions 484-494 (ECTGLFWEWWR) match the Conserved undecapeptide motif. A Cholesterol binding motif is present at residues 516–517 (TL).

Belongs to the cholesterol-dependent cytolysin family. As to quaternary structure, homooligomeric pore complex of 35 to 50 subunits; when inserted in the host membrane.

The protein localises to the secreted. Its subcellular location is the host cell membrane. In terms of biological role, a cholesterol-dependent toxin that causes cytolysis by forming pores in cholesterol containing host membranes. L.seeligeri is non-pathogenic, perhaps in part because this protein is about 25% as toxic as listeriolysin O. Mutating a single residue in the undecapeptide increases toxicity 2-fold. After binding to target membranes, the protein undergoes a major conformation change, leading to its insertion in the host membrane and formation of an oligomeric pore complex. Cholesterol is required for binding to host membranes, membrane insertion and pore formation; cholesterol binding is mediated by a Thr-Leu pair in the C-terminus. Can be reversibly inactivated by oxidation. In Listeria seeligeri, this protein is Seeligeriolysin.